A 284-amino-acid polypeptide reads, in one-letter code: Bifunctional protein FolD (284 aa).

Residues 165–167, S190, and V231 contribute to the NADP(+) site; that span reads GRS.

It belongs to the tetrahydrofolate dehydrogenase/cyclohydrolase family. Homodimer.

It carries out the reaction (6R)-5,10-methylene-5,6,7,8-tetrahydrofolate + NADP(+) = (6R)-5,10-methenyltetrahydrofolate + NADPH. The catalysed reaction is (6R)-5,10-methenyltetrahydrofolate + H2O = (6R)-10-formyltetrahydrofolate + H(+). Its pathway is one-carbon metabolism; tetrahydrofolate interconversion. Catalyzes the oxidation of 5,10-methylenetetrahydrofolate to 5,10-methenyltetrahydrofolate and then the hydrolysis of 5,10-methenyltetrahydrofolate to 10-formyltetrahydrofolate. The protein is Bifunctional protein FolD of Bacillus licheniformis (strain ATCC 14580 / DSM 13 / JCM 2505 / CCUG 7422 / NBRC 12200 / NCIMB 9375 / NCTC 10341 / NRRL NRS-1264 / Gibson 46).